Here is a 200-residue protein sequence, read N- to C-terminus: Transcription factor FapR (200 aa).

It belongs to the FapR family.

Transcriptional factor involved in regulation of membrane lipid biosynthesis by repressing genes involved in fatty acid and phospholipid metabolism. This Caldanaerobacter subterraneus subsp. tengcongensis (strain DSM 15242 / JCM 11007 / NBRC 100824 / MB4) (Thermoanaerobacter tengcongensis) protein is Transcription factor FapR.